An 85-amino-acid chain; its full sequence is RNA-binding protein Hfq (85 aa).

The region spanning Asp-10–Leu-70 is the Sm domain.

This sequence belongs to the Hfq family. As to quaternary structure, homohexamer.

Its function is as follows. RNA chaperone that binds small regulatory RNA (sRNAs) and mRNAs to facilitate mRNA translational regulation in response to envelope stress, environmental stress and changes in metabolite concentrations. Also binds with high specificity to tRNAs. The chain is RNA-binding protein Hfq from Clostridium botulinum (strain 657 / Type Ba4).